Reading from the N-terminus, the 149-residue chain is Transcriptional repressor NrdR (149 aa).

A zinc finger lies at 3-34 (CPFCSHQETQVVETRVSEDGDFIRRRRQCGAC). Residues 49–139 (PTVVKKDGRR…VYRSFEDIDE (91 aa)) enclose the ATP-cone domain.

The protein belongs to the NrdR family. The cofactor is Zn(2+).

Negatively regulates transcription of bacterial ribonucleotide reductase nrd genes and operons by binding to NrdR-boxes. This is Transcriptional repressor NrdR from Acidovorax sp. (strain JS42).